We begin with the raw amino-acid sequence, 751 residues long: Proton-associated sugar transporter A (751 aa).

The next 6 membrane-spanning stretches (helical) occupy residues Ile93–Leu113, Ser123–Trp143, Arg155–Gly175, Trp191–Asp211, Ile233–Trp253, and Val268–Ile288. Thr500 carries the phosphothreonine modification. A run of 6 helical transmembrane segments spans residues Gly536–Phe556, Val576–Ile596, Val606–Leu626, Leu630–Leu650, Phe688–Ala708, and Gly710–Val730.

This sequence belongs to the glycoside-pentoside-hexuronide (GPH) cation symporter transporter (TC 2.A.2) family. In terms of tissue distribution, predominantly expressed in brain.

The protein resides in the membrane. It catalyses the reaction D-galactose(in) + H(+)(in) = D-galactose(out) + H(+)(out). It carries out the reaction D-glucose(out) + H(+)(out) = D-glucose(in) + H(+)(in). Its function is as follows. Proton-associated glucose transporter in the brain. The protein is Proton-associated sugar transporter A of Rattus norvegicus (Rat).